A 939-amino-acid polypeptide reads, in one-letter code: Valine--tRNA ligase (939 aa).

A 'HIGH' region motif is present at residues 47–57 (PNVTGILHMGH). Residues 563-567 (KLSKS) carry the 'KMSKS' region motif. Residue K566 coordinates ATP. Positions 874-939 (EHLAKERVRL…QSILDKLASL (66 aa)) form a coiled coil.

It belongs to the class-I aminoacyl-tRNA synthetase family. ValS type 1 subfamily. Monomer.

The protein resides in the cytoplasm. It carries out the reaction tRNA(Val) + L-valine + ATP = L-valyl-tRNA(Val) + AMP + diphosphate. In terms of biological role, catalyzes the attachment of valine to tRNA(Val). As ValRS can inadvertently accommodate and process structurally similar amino acids such as threonine, to avoid such errors, it has a 'posttransfer' editing activity that hydrolyzes mischarged Thr-tRNA(Val) in a tRNA-dependent manner. This is Valine--tRNA ligase from Chlamydia trachomatis serovar L2 (strain ATCC VR-902B / DSM 19102 / 434/Bu).